We begin with the raw amino-acid sequence, 133 residues long: Protein PROTON GRADIENT REGULATION 5, chloroplastic (133 aa).

Residues 1–60 constitute a chloroplast transit peptide; sequence MAAASISAIGCNQTLIGTSFYGGWGSSISGEDYQTMLSKTVAPPQQARVSRKAIRAVPMM.

Belongs to the PGR5 family. In terms of assembly, interacts with PGRL1A and PGRL1B. In terms of processing, disulfide bonds; Cys-11 and Cys-105 are probably involved in the formation of disulfide bridges with 'Cys-300' and 'Cys-303' of PGRL1A. 'Cys-272' and 'Cys-275' of PGRL1A may also be used to form the disulfide bridges, but in this case the cyclic electron flow is lost.

The protein resides in the plastid. Its subcellular location is the chloroplast thylakoid membrane. In terms of biological role, critical for growth under fluctuating-light conditions. Involved in the regulation of the cyclic electron flow (CEF) around Photosystem I. Essential for the reduction of PGRL1A by ferredoxin and for photoprotection. Contributes to maximize photosynthesis efficiency after a long dark adaptation via the regulation of non-photochemical quenching (NPQ); acts independently from DLDG1. Promotes the induction of steady-state proton motive force (pmf) and energy-dependent quenching (qE). The polypeptide is Protein PROTON GRADIENT REGULATION 5, chloroplastic (Arabidopsis thaliana (Mouse-ear cress)).